A 334-amino-acid polypeptide reads, in one-letter code: Mediator of RNA polymerase II transcription subunit 4 (334 aa).

Residues 76–100 are a coiled coil; that stretch reads LIRTLKAHVEKRDEVIQQVENNLKA. Over residues 188–203 the composition is skewed to low complexity; it reads SSAQKPIIASPSASSS. Disordered regions lie at residues 188–234 and 252–334; these read SSAQ…GYGA and EKQW…GRNK. Polar residues-rich tracts occupy residues 204–225 and 264–282; these read NGGT…TNGD and ATSS…SSPS.

It belongs to the Mediator complex subunit 4 family. In terms of assembly, component of the Mediator complex.

Its subcellular location is the nucleus. Its function is as follows. Component of the Mediator complex, a coactivator involved in the regulated transcription of nearly all RNA polymerase II-dependent genes. Mediator functions as a bridge to convey information from gene-specific regulatory proteins to the basal RNA polymerase II transcription machinery. Mediator is recruited to promoters by direct interactions with regulatory proteins and serves as a scaffold for the assembly of a functional preinitiation complex with RNA polymerase II and the general transcription factors. In Caenorhabditis briggsae, this protein is Mediator of RNA polymerase II transcription subunit 4 (mdt-4).